The following is a 320-amino-acid chain: Phospho-N-acetylmuramoyl-pentapeptide-transferase (320 aa).

10 consecutive transmembrane segments (helical) span residues Ile7 to Phe27, Gly50 to Phe70, Ile77 to Ile97, Leu113 to Ser133, Trp148 to Thr168, Gly173 to Ser193, Met198 to Asn216, Val221 to Val241, Val247 to Val267, and Val297 to Gln317.

Belongs to the glycosyltransferase 4 family. MraY subfamily. It depends on Mg(2+) as a cofactor.

The protein localises to the cell membrane. The catalysed reaction is UDP-N-acetyl-alpha-D-muramoyl-L-alanyl-gamma-D-glutamyl-meso-2,6-diaminopimeloyl-D-alanyl-D-alanine + di-trans,octa-cis-undecaprenyl phosphate = di-trans,octa-cis-undecaprenyl diphospho-N-acetyl-alpha-D-muramoyl-L-alanyl-D-glutamyl-meso-2,6-diaminopimeloyl-D-alanyl-D-alanine + UMP. It functions in the pathway cell wall biogenesis; peptidoglycan biosynthesis. Functionally, catalyzes the initial step of the lipid cycle reactions in the biosynthesis of the cell wall peptidoglycan: transfers peptidoglycan precursor phospho-MurNAc-pentapeptide from UDP-MurNAc-pentapeptide onto the lipid carrier undecaprenyl phosphate, yielding undecaprenyl-pyrophosphoryl-MurNAc-pentapeptide, known as lipid I. This is Phospho-N-acetylmuramoyl-pentapeptide-transferase from Caldicellulosiruptor bescii (strain ATCC BAA-1888 / DSM 6725 / KCTC 15123 / Z-1320) (Anaerocellum thermophilum).